We begin with the raw amino-acid sequence, 175 residues long: ATP synthase subunit b (175 aa).

Residues 19-39 (LVVGTIAFALLVFVLLKFVMP) form a helical membrane-spanning segment.

It belongs to the ATPase B chain family. In terms of assembly, F-type ATPases have 2 components, F(1) - the catalytic core - and F(0) - the membrane proton channel. F(1) has five subunits: alpha(3), beta(3), gamma(1), delta(1), epsilon(1). F(0) has three main subunits: a(1), b(2) and c(10-14). The alpha and beta chains form an alternating ring which encloses part of the gamma chain. F(1) is attached to F(0) by a central stalk formed by the gamma and epsilon chains, while a peripheral stalk is formed by the delta and b chains.

Its subcellular location is the cell membrane. Its function is as follows. F(1)F(0) ATP synthase produces ATP from ADP in the presence of a proton or sodium gradient. F-type ATPases consist of two structural domains, F(1) containing the extramembraneous catalytic core and F(0) containing the membrane proton channel, linked together by a central stalk and a peripheral stalk. During catalysis, ATP synthesis in the catalytic domain of F(1) is coupled via a rotary mechanism of the central stalk subunits to proton translocation. In terms of biological role, component of the F(0) channel, it forms part of the peripheral stalk, linking F(1) to F(0). This Salinispora tropica (strain ATCC BAA-916 / DSM 44818 / JCM 13857 / NBRC 105044 / CNB-440) protein is ATP synthase subunit b.